The chain runs to 297 residues: Pyridoxal 5'-phosphate synthase subunit PdxS (297 aa).

D27 is a binding site for D-ribose 5-phosphate. K84 (schiff-base intermediate with D-ribose 5-phosphate) is an active-site residue. G156 is a D-ribose 5-phosphate binding site. Position 168 (R168) interacts with D-glyceraldehyde 3-phosphate. D-ribose 5-phosphate-binding positions include G217 and 238–239 (GS).

The protein belongs to the PdxS/SNZ family. In terms of assembly, in the presence of PdxT, forms a dodecamer of heterodimers.

The catalysed reaction is aldehydo-D-ribose 5-phosphate + D-glyceraldehyde 3-phosphate + L-glutamine = pyridoxal 5'-phosphate + L-glutamate + phosphate + 3 H2O + H(+). The protein operates within cofactor biosynthesis; pyridoxal 5'-phosphate biosynthesis. In terms of biological role, catalyzes the formation of pyridoxal 5'-phosphate from ribose 5-phosphate (RBP), glyceraldehyde 3-phosphate (G3P) and ammonia. The ammonia is provided by the PdxT subunit. Can also use ribulose 5-phosphate and dihydroxyacetone phosphate as substrates, resulting from enzyme-catalyzed isomerization of RBP and G3P, respectively. The protein is Pyridoxal 5'-phosphate synthase subunit PdxS of Corynebacterium diphtheriae (strain ATCC 700971 / NCTC 13129 / Biotype gravis).